Consider the following 131-residue polypeptide: Small ribosomal subunit protein uS8 (131 aa).

It belongs to the universal ribosomal protein uS8 family. Part of the 30S ribosomal subunit. Contacts proteins S5 and S12.

In terms of biological role, one of the primary rRNA binding proteins, it binds directly to 16S rRNA central domain where it helps coordinate assembly of the platform of the 30S subunit. This chain is Small ribosomal subunit protein uS8, found in Sorangium cellulosum (strain So ce56) (Polyangium cellulosum (strain So ce56)).